Reading from the N-terminus, the 474-residue chain is Trehalose-6-phosphate synthase (474 aa).

Arg10 contacts D-glucose 6-phosphate. Residue 22-23 coordinates UDP-alpha-D-glucose; the sequence is GG. D-glucose 6-phosphate-binding residues include Tyr77 and Asp131. UDP-alpha-D-glucose-binding residues include Arg263 and Lys268. Arg301 contributes to the D-glucose 6-phosphate binding site. UDP-alpha-D-glucose is bound by residues Phe340 and 366–370; that span reads LVAKE.

Belongs to the glycosyltransferase 20 family. Homotetramer.

The enzyme catalyses D-glucose 6-phosphate + UDP-alpha-D-glucose = alpha,alpha-trehalose 6-phosphate + UDP + H(+). Its pathway is glycan biosynthesis; trehalose biosynthesis. In terms of biological role, probably involved in the osmoprotection via the biosynthesis of trehalose. Catalyzes the transfer of glucose from UDP-alpha-D-glucose (UDP-Glc) to D-glucose 6-phosphate (Glc-6-P) to form trehalose-6-phosphate. Acts with retention of the anomeric configuration of the UDP-sugar donor. The sequence is that of Trehalose-6-phosphate synthase from Shigella dysenteriae serotype 1 (strain Sd197).